A 417-amino-acid chain; its full sequence is Multifunctional CCA protein (417 aa).

ATP contacts are provided by Gly-8 and Arg-11. CTP is bound by residues Gly-8 and Arg-11. Residues Asp-21 and Asp-23 each contribute to the Mg(2+) site. Residues Arg-91, Arg-143, and Arg-146 each contribute to the ATP site. CTP-binding residues include Arg-91, Arg-143, and Arg-146. One can recognise an HD domain in the interval 232–333 (TGVHVMMVVD…VRLFERSDAL (102 aa)).

The protein belongs to the tRNA nucleotidyltransferase/poly(A) polymerase family. Bacterial CCA-adding enzyme type 1 subfamily. As to quaternary structure, monomer. Can also form homodimers and oligomers. The cofactor is Mg(2+). It depends on Ni(2+) as a cofactor.

The catalysed reaction is a tRNA precursor + 2 CTP + ATP = a tRNA with a 3' CCA end + 3 diphosphate. It carries out the reaction a tRNA with a 3' CCA end + 2 CTP + ATP = a tRNA with a 3' CCACCA end + 3 diphosphate. Functionally, catalyzes the addition and repair of the essential 3'-terminal CCA sequence in tRNAs without using a nucleic acid template. Adds these three nucleotides in the order of C, C, and A to the tRNA nucleotide-73, using CTP and ATP as substrates and producing inorganic pyrophosphate. tRNA 3'-terminal CCA addition is required both for tRNA processing and repair. Also involved in tRNA surveillance by mediating tandem CCA addition to generate a CCACCA at the 3' terminus of unstable tRNAs. While stable tRNAs receive only 3'-terminal CCA, unstable tRNAs are marked with CCACCA and rapidly degraded. This is Multifunctional CCA protein from Paraburkholderia phymatum (strain DSM 17167 / CIP 108236 / LMG 21445 / STM815) (Burkholderia phymatum).